We begin with the raw amino-acid sequence, 278 residues long: 3-methyl-2-oxobutanoate hydroxymethyltransferase (278 aa).

Mg(2+) contacts are provided by aspartate 43 and aspartate 82. Residues 43–44 (DS), aspartate 82, and lysine 112 contribute to the 3-methyl-2-oxobutanoate site. Residue glutamate 114 coordinates Mg(2+). Glutamate 181 functions as the Proton acceptor in the catalytic mechanism.

This sequence belongs to the PanB family. Homodecamer; pentamer of dimers. Mg(2+) serves as cofactor.

Its subcellular location is the cytoplasm. It catalyses the reaction 3-methyl-2-oxobutanoate + (6R)-5,10-methylene-5,6,7,8-tetrahydrofolate + H2O = 2-dehydropantoate + (6S)-5,6,7,8-tetrahydrofolate. It functions in the pathway cofactor biosynthesis; (R)-pantothenate biosynthesis; (R)-pantoate from 3-methyl-2-oxobutanoate: step 1/2. Functionally, catalyzes the reversible reaction in which hydroxymethyl group from 5,10-methylenetetrahydrofolate is transferred onto alpha-ketoisovalerate to form ketopantoate. The chain is 3-methyl-2-oxobutanoate hydroxymethyltransferase from Bacillus cereus (strain AH187).